A 436-amino-acid chain; its full sequence is D-amino acid dehydrogenase (436 aa).

3-17 (ILILGSGVIGVTSAW) is a binding site for FAD.

The protein belongs to the DadA oxidoreductase family. Requires FAD as cofactor.

The catalysed reaction is a D-alpha-amino acid + A + H2O = a 2-oxocarboxylate + AH2 + NH4(+). It participates in amino-acid degradation; D-alanine degradation; NH(3) and pyruvate from D-alanine: step 1/1. Oxidative deamination of D-amino acids. The protein is D-amino acid dehydrogenase of Photorhabdus laumondii subsp. laumondii (strain DSM 15139 / CIP 105565 / TT01) (Photorhabdus luminescens subsp. laumondii).